The following is a 362-amino-acid chain: Phosphoserine aminotransferase (362 aa).

L-glutamate-binding residues include serine 9 and arginine 42. Pyridoxal 5'-phosphate is bound by residues 76 to 77, tryptophan 102, threonine 153, aspartate 174, and glutamine 197; that span reads GR. Residue lysine 198 is modified to N6-(pyridoxal phosphate)lysine. 239–240 contacts pyridoxal 5'-phosphate; the sequence is NT.

This sequence belongs to the class-V pyridoxal-phosphate-dependent aminotransferase family. SerC subfamily. As to quaternary structure, homodimer. Requires pyridoxal 5'-phosphate as cofactor.

Its subcellular location is the cytoplasm. It catalyses the reaction O-phospho-L-serine + 2-oxoglutarate = 3-phosphooxypyruvate + L-glutamate. The catalysed reaction is 4-(phosphooxy)-L-threonine + 2-oxoglutarate = (R)-3-hydroxy-2-oxo-4-phosphooxybutanoate + L-glutamate. It functions in the pathway amino-acid biosynthesis; L-serine biosynthesis; L-serine from 3-phospho-D-glycerate: step 2/3. The protein operates within cofactor biosynthesis; pyridoxine 5'-phosphate biosynthesis; pyridoxine 5'-phosphate from D-erythrose 4-phosphate: step 3/5. Functionally, catalyzes the reversible conversion of 3-phosphohydroxypyruvate to phosphoserine and of 3-hydroxy-2-oxo-4-phosphonooxybutanoate to phosphohydroxythreonine. The polypeptide is Phosphoserine aminotransferase (Escherichia fergusonii (strain ATCC 35469 / DSM 13698 / CCUG 18766 / IAM 14443 / JCM 21226 / LMG 7866 / NBRC 102419 / NCTC 12128 / CDC 0568-73)).